Reading from the N-terminus, the 423-residue chain is Diaminobutyrate--2-oxoglutarate transaminase (423 aa).

At Lys271 the chain carries N6-(pyridoxal phosphate)lysine.

This sequence belongs to the class-III pyridoxal-phosphate-dependent aminotransferase family. Pyridoxal 5'-phosphate is required as a cofactor.

It catalyses the reaction L-2,4-diaminobutanoate + 2-oxoglutarate = L-aspartate 4-semialdehyde + L-glutamate. The protein operates within amine and polyamine biosynthesis; ectoine biosynthesis; L-ectoine from L-aspartate 4-semialdehyde: step 1/3. Functionally, catalyzes reversively the conversion of L-aspartate beta-semialdehyde (ASA) to L-2,4-diaminobutyrate (DABA) by transamination with L-glutamate. This Streptomyces avermitilis (strain ATCC 31267 / DSM 46492 / JCM 5070 / NBRC 14893 / NCIMB 12804 / NRRL 8165 / MA-4680) protein is Diaminobutyrate--2-oxoglutarate transaminase (ectB).